The primary structure comprises 493 residues: Cysteine--tRNA ligase (493 aa).

Cys29 is a Zn(2+) binding site. Residues 31–41 (ATVQSEPHIGH) carry the 'HIGH' region motif. The Zn(2+) site is built by Cys214, His239, and Glu243. The 'KMSKS' region signature appears at 270-274 (KMSKS). Residue Lys273 coordinates ATP.

The protein belongs to the class-I aminoacyl-tRNA synthetase family. In terms of assembly, monomer. Requires Zn(2+) as cofactor.

The protein localises to the cytoplasm. The enzyme catalyses tRNA(Cys) + L-cysteine + ATP = L-cysteinyl-tRNA(Cys) + AMP + diphosphate. The sequence is that of Cysteine--tRNA ligase from Renibacterium salmoninarum (strain ATCC 33209 / DSM 20767 / JCM 11484 / NBRC 15589 / NCIMB 2235).